Reading from the N-terminus, the 71-residue chain is UPF0346 protein str0441 (71 aa).

It belongs to the UPF0346 family.

In Streptococcus thermophilus (strain CNRZ 1066), this protein is UPF0346 protein str0441.